Here is a 293-residue protein sequence, read N- to C-terminus: Fructose-bisphosphate aldolase (293 aa).

Position 50 (serine 50) interacts with D-glyceraldehyde 3-phosphate. Aspartate 85 functions as the Proton donor in the catalytic mechanism. Zn(2+) contacts are provided by histidine 86, aspartate 106, glutamate 136, and histidine 178. A dihydroxyacetone phosphate-binding site is contributed by glycine 179. Histidine 208 contacts Zn(2+). Dihydroxyacetone phosphate-binding positions include 209-211 and 230-233; these read GGS and NVNT.

It belongs to the class II fructose-bisphosphate aldolase family. The cofactor is Zn(2+).

It carries out the reaction beta-D-fructose 1,6-bisphosphate = D-glyceraldehyde 3-phosphate + dihydroxyacetone phosphate. It participates in carbohydrate degradation; glycolysis; D-glyceraldehyde 3-phosphate and glycerone phosphate from D-glucose: step 4/4. Catalyzes the aldol condensation of dihydroxyacetone phosphate (DHAP or glycerone-phosphate) with glyceraldehyde 3-phosphate (G3P) to form fructose 1,6-bisphosphate (FBP) in gluconeogenesis and the reverse reaction in glycolysis. The chain is Fructose-bisphosphate aldolase (fba) from Streptococcus pyogenes serotype M3 (strain ATCC BAA-595 / MGAS315).